A 641-amino-acid chain; its full sequence is Histone-lysine N-methyltransferase set9 (641 aa).

One can recognise an SET domain in the interval 120–234 (CPFEVTTTNR…IGEEITVSYG (115 aa)). Disordered stretches follow at residues 261–388 (NLAP…STAA) and 596–628 (GVSF…NTRV). Positions 348-359 (AGDSGKSSSAGD) are enriched in low complexity. A compositionally biased stretch (polar residues) spans 361-381 (VESSGTDSESLTSITPQESQR). Residues 608 to 625 (SDMRSETPDSEALDERGN) are compositionally biased toward basic and acidic residues.

It belongs to the class V-like SAM-binding methyltransferase superfamily. Histone-lysine methyltransferase family. Suvar4-20 subfamily.

It is found in the nucleus. The protein localises to the chromosome. It carries out the reaction L-lysyl(20)-[histone H4] + 3 S-adenosyl-L-methionine = N(6),N(6),N(6)-trimethyl-L-lysyl(20)-[histone H4] + 3 S-adenosyl-L-homocysteine + 3 H(+). In terms of biological role, histone methyltransferase that trimethylates 'Lys-20' of histone H4 to form H4K20me3. This is Histone-lysine N-methyltransferase set9 (set9) from Emericella nidulans (strain FGSC A4 / ATCC 38163 / CBS 112.46 / NRRL 194 / M139) (Aspergillus nidulans).